The sequence spans 90 residues: Probable Fe(2+)-trafficking protein (90 aa).

This sequence belongs to the Fe(2+)-trafficking protein family.

Its function is as follows. Could be a mediator in iron transactions between iron acquisition and iron-requiring processes, such as synthesis and/or repair of Fe-S clusters in biosynthetic enzymes. The protein is Probable Fe(2+)-trafficking protein of Colwellia psychrerythraea (strain 34H / ATCC BAA-681) (Vibrio psychroerythus).